Consider the following 74-residue polypeptide: DNA-directed RNA polymerase subunit omega (74 aa).

This sequence belongs to the RNA polymerase subunit omega family. As to quaternary structure, the RNAP catalytic core consists of 2 alpha, 1 beta, 1 beta' and 1 omega subunit. When a sigma factor is associated with the core the holoenzyme is formed, which can initiate transcription.

It carries out the reaction RNA(n) + a ribonucleoside 5'-triphosphate = RNA(n+1) + diphosphate. Functionally, promotes RNA polymerase assembly. Latches the N- and C-terminal regions of the beta' subunit thereby facilitating its interaction with the beta and alpha subunits. This is DNA-directed RNA polymerase subunit omega from Lactobacillus acidophilus (strain ATCC 700396 / NCK56 / N2 / NCFM).